Here is a 322-residue protein sequence, read N- to C-terminus: Transaldolase (322 aa).

The active-site Schiff-base intermediate with substrate is Lys136.

This sequence belongs to the transaldolase family. Type 1 subfamily. As to quaternary structure, homodimer.

Its subcellular location is the cytoplasm. The catalysed reaction is D-sedoheptulose 7-phosphate + D-glyceraldehyde 3-phosphate = D-erythrose 4-phosphate + beta-D-fructose 6-phosphate. It functions in the pathway carbohydrate degradation; pentose phosphate pathway; D-glyceraldehyde 3-phosphate and beta-D-fructose 6-phosphate from D-ribose 5-phosphate and D-xylulose 5-phosphate (non-oxidative stage): step 2/3. Functionally, transaldolase is important for the balance of metabolites in the pentose-phosphate pathway. This is Transaldolase from Xanthomonas oryzae pv. oryzae (strain MAFF 311018).